The primary structure comprises 516 residues: Probable rhamnogalacturonase B (516 aa).

The signal sequence occupies residues 1-21 (MRLHAFTLLSLLGLVPSFAAA). Cysteines 42 and 68 form a disulfide. The N-linked (GlcNAc...) asparagine glycan is linked to asparagine 145. Aspartate 219 acts as the Proton donor in catalysis. Cysteine 221 and cysteine 238 form a disulfide bridge. Asparagine 239 carries N-linked (GlcNAc...) asparagine glycosylation. Histidine 294 is a catalytic residue. N-linked (GlcNAc...) asparagine glycosylation occurs at asparagine 321. 2 disulfide bridges follow: cysteine 344–cysteine 350 and cysteine 372–cysteine 381. The segment at 462–516 (ETPAAASRSEQVVQGASQETSQPAPESAGPVRSVPTGGNRPSRHRHGHHHFWIAA) is disordered. Polar residues predominate over residues 469 to 485 (RSEQVVQGASQETSQPA). Basic residues predominate over residues 502–516 (PSRHRHGHHHFWIAA).

This sequence belongs to the glycosyl hydrolase 28 family.

It localises to the secreted. The enzyme catalyses Endohydrolysis of alpha-D-GalA-(1-&gt;2)-alpha-L-Rha glycosidic bond in the rhamnogalacturonan I backbone with initial inversion of anomeric configuration releasing oligosaccharides with beta-D-GalA at the reducing end.. Pectinolytic enzymes consist of four classes of enzymes: pectine lyase, polygalacturonase, pectin methylesterase and rhamnogalacturonase. Hydrolyzes alpha-D-galacturonopyranosyl-(1,2)-alpha-L-rhamnopyranosyl linkages in the backbone of the hairy regions of pectins. The chain is Probable rhamnogalacturonase B (rhgB) from Neosartorya fischeri (strain ATCC 1020 / DSM 3700 / CBS 544.65 / FGSC A1164 / JCM 1740 / NRRL 181 / WB 181) (Aspergillus fischerianus).